The sequence spans 592 residues: MRSHYCGQLNETLVDEEVALCGWVHRRRDHGGVIFLDLRDRDGIAQVVVDPDTPEAFANADRARNEFVLRIRGRIRLRPEGTQNAHMPTGMIEVLAKDVEVLNTAATPPFQLDEHGKVGEEIRLKHRYIDLRRPEMIDKLRLRSRITHSVRAYLEGQGFLDIETPILTRATPEGARDYLVPSRTHAGEFFALPQSPQLFKQLLMVSGFDRYYQIAKCFRDEDLRADRQPEFTQIDLEASFVEESDIMSLTEDMIRRLFQDVLDVELPAFPKMPYSEAMNRYGSDKPDLRIPLELVDVDDLMQGVDFKVFSGPAKADDGRVAALKVTGGATLSRKEIDAYTDFVNIYGAKGLAWIKVNERAKGIQGLQSPIVKFMEDIIESLLDRVGAEDGDIIFFGADKARIVNEALGALRVKLGEDLDLYTQAWAPLWVVDFPMFEADDNGRLAALHHPFTAPSCTPEAFKADPANALSRAYDMVLNGTELGGGSIRIHDQTMQRAVFEVLGIGEEEADEKFGFLLDALKFGAPPHGGLAFGLDRLVMLMSGARTIREVIAFPKTQSAACLMTDAPGEVSAEQLKELNIRLRQKAQNNGDV.

Position 173 (Glu-173) interacts with L-aspartate. The interval 197–200 (QLFK) is aspartate. Arg-219 is a binding site for L-aspartate. ATP is bound by residues 219 to 221 (RDE) and Gln-228. An L-aspartate-binding site is contributed by His-448. Glu-481 lines the ATP pocket. Arg-488 is a binding site for L-aspartate. 533 to 536 (GLDR) contributes to the ATP binding site.

The protein belongs to the class-II aminoacyl-tRNA synthetase family. Type 1 subfamily. As to quaternary structure, homodimer.

Its subcellular location is the cytoplasm. It catalyses the reaction tRNA(Asx) + L-aspartate + ATP = L-aspartyl-tRNA(Asx) + AMP + diphosphate. Aspartyl-tRNA synthetase with relaxed tRNA specificity since it is able to aspartylate not only its cognate tRNA(Asp) but also tRNA(Asn). Reaction proceeds in two steps: L-aspartate is first activated by ATP to form Asp-AMP and then transferred to the acceptor end of tRNA(Asp/Asn). The protein is Aspartate--tRNA(Asp/Asn) ligase of Chromohalobacter salexigens (strain ATCC BAA-138 / DSM 3043 / CIP 106854 / NCIMB 13768 / 1H11).